A 215-amino-acid polypeptide reads, in one-letter code: Histidine biosynthesis bifunctional protein HisIE (215 aa).

The tract at residues 1–126 is phosphoribosyl-AMP cyclohydrolase; that stretch reads MSHSDLPLAN…GHKSPPPADM (126 aa). The tract at residues 127 to 215 is phosphoribosyl-ATP pyrophosphohydrolase; that stretch reads LTELARVIGD…VYRKLGDRRR (89 aa).

It in the N-terminal section; belongs to the PRA-CH family. The protein in the C-terminal section; belongs to the PRA-PH family.

Its subcellular location is the cytoplasm. It carries out the reaction 1-(5-phospho-beta-D-ribosyl)-ATP + H2O = 1-(5-phospho-beta-D-ribosyl)-5'-AMP + diphosphate + H(+). The catalysed reaction is 1-(5-phospho-beta-D-ribosyl)-5'-AMP + H2O = 1-(5-phospho-beta-D-ribosyl)-5-[(5-phospho-beta-D-ribosylamino)methylideneamino]imidazole-4-carboxamide. It participates in amino-acid biosynthesis; L-histidine biosynthesis; L-histidine from 5-phospho-alpha-D-ribose 1-diphosphate: step 2/9. The protein operates within amino-acid biosynthesis; L-histidine biosynthesis; L-histidine from 5-phospho-alpha-D-ribose 1-diphosphate: step 3/9. This is Histidine biosynthesis bifunctional protein HisIE (hisI) from Synechocystis sp. (strain ATCC 27184 / PCC 6803 / Kazusa).